We begin with the raw amino-acid sequence, 336 residues long: Structure-specific endonuclease subunit SLX1 (336 aa).

The 84-residue stretch at 21-104 (SFYGVYLLQS…QHCHETRHIK (84 aa)) folds into the GIY-YIG domain. The tract at residues 37–57 (FYIGSTPDPPRRLRQHNGDLK) is disordered. Residues 214-290 (CALCLEPIEQ…PATVNRCCSC (77 aa)) form an SLX1-type zinc finger.

It belongs to the SLX1 family. Forms a heterodimer with SLX4. It depends on a divalent metal cation as a cofactor.

Its subcellular location is the nucleus. In terms of biological role, catalytic subunit of the SLX1-SLX4 structure-specific endonuclease that resolves DNA secondary structures generated during DNA repair and recombination. Has endonuclease activity towards branched DNA substrates, introducing single-strand cuts in duplex DNA close to junctions with ss-DNA. This is Structure-specific endonuclease subunit SLX1 from Scheffersomyces stipitis (strain ATCC 58785 / CBS 6054 / NBRC 10063 / NRRL Y-11545) (Yeast).